The sequence spans 101 residues: Small ribosomal subunit protein uS14 (101 aa).

Belongs to the universal ribosomal protein uS14 family. Part of the 30S ribosomal subunit. Contacts proteins S3 and S10.

Binds 16S rRNA, required for the assembly of 30S particles and may also be responsible for determining the conformation of the 16S rRNA at the A site. This Baumannia cicadellinicola subsp. Homalodisca coagulata protein is Small ribosomal subunit protein uS14.